Reading from the N-terminus, the 286-residue chain is Glycine--tRNA ligase alpha subunit (286 aa).

It belongs to the class-II aminoacyl-tRNA synthetase family. Tetramer of two alpha and two beta subunits.

The protein resides in the cytoplasm. The catalysed reaction is tRNA(Gly) + glycine + ATP = glycyl-tRNA(Gly) + AMP + diphosphate. This chain is Glycine--tRNA ligase alpha subunit, found in Campylobacter lari (strain RM2100 / D67 / ATCC BAA-1060).